The sequence spans 486 residues: L-carnitine:corrinoid methyltransferase (486 aa).

It belongs to the trimethylamine methyltransferase family. As to quaternary structure, the L-carnitine:THF methyl transfer system is composed of two methyltransferases, MtcB and MtqA, and the corrinoid protein MtqC.

It carries out the reaction Co(I)-[quaternary-amine-specific corrinoid protein] + (R)-carnitine + H(+) = (3R)-4-(dimethylamino)-3-hydroxybutanoate + methyl-Co(III)-[quaternary-amine-specific corrinoid protein]. In terms of biological role, involved in the degradation of the quaternary amine L-carnitine. Component of a corrinoid-dependent methyltransferase system that transfers a methyl group from L-carnitine to tetrahydrofolate (THF), forming methyl-THF, a key intermediate in the Wood-Ljungdahl acetogenesis pathway. MtcB catalyzes the methylation of the corrinoid protein MtqC, using L-carnitine as the methyl donor. L-carnitine demethylation generates the unusual biological product norcarnitine, which is likely degraded by other members of the gut microbiota. In vitro, can methylate free cob(I)alamin. The protein is L-carnitine:corrinoid methyltransferase of Eubacterium limosum.